The following is a 183-amino-acid chain: Peptidyl-tRNA hydrolase (183 aa).

Position 14 (Y14) interacts with tRNA. H19 acts as the Proton acceptor in catalysis. Positions 55 and 57 each coordinate tRNA.

Belongs to the PTH family. In terms of assembly, monomer.

The protein localises to the cytoplasm. The catalysed reaction is an N-acyl-L-alpha-aminoacyl-tRNA + H2O = an N-acyl-L-amino acid + a tRNA + H(+). Its function is as follows. Hydrolyzes ribosome-free peptidyl-tRNAs (with 1 or more amino acids incorporated), which drop off the ribosome during protein synthesis, or as a result of ribosome stalling. Catalyzes the release of premature peptidyl moieties from peptidyl-tRNA molecules trapped in stalled 50S ribosomal subunits, and thus maintains levels of free tRNAs and 50S ribosomes. This Thermus thermophilus (strain ATCC BAA-163 / DSM 7039 / HB27) protein is Peptidyl-tRNA hydrolase.